A 124-amino-acid chain; its full sequence is Small ribosomal subunit protein uS12 (124 aa).

3-methylthioaspartic acid is present on Asp-89.

Belongs to the universal ribosomal protein uS12 family. Part of the 30S ribosomal subunit. Contacts proteins S8 and S17. May interact with IF1 in the 30S initiation complex.

With S4 and S5 plays an important role in translational accuracy. Its function is as follows. Interacts with and stabilizes bases of the 16S rRNA that are involved in tRNA selection in the A site and with the mRNA backbone. Located at the interface of the 30S and 50S subunits, it traverses the body of the 30S subunit contacting proteins on the other side and probably holding the rRNA structure together. The combined cluster of proteins S8, S12 and S17 appears to hold together the shoulder and platform of the 30S subunit. This Aliivibrio salmonicida (strain LFI1238) (Vibrio salmonicida (strain LFI1238)) protein is Small ribosomal subunit protein uS12.